The chain runs to 182 residues: Protein GrpE (182 aa).

This sequence belongs to the GrpE family. Homodimer.

Its subcellular location is the cytoplasm. In terms of biological role, participates actively in the response to hyperosmotic and heat shock by preventing the aggregation of stress-denatured proteins, in association with DnaK and GrpE. It is the nucleotide exchange factor for DnaK and may function as a thermosensor. Unfolded proteins bind initially to DnaJ; upon interaction with the DnaJ-bound protein, DnaK hydrolyzes its bound ATP, resulting in the formation of a stable complex. GrpE releases ADP from DnaK; ATP binding to DnaK triggers the release of the substrate protein, thus completing the reaction cycle. Several rounds of ATP-dependent interactions between DnaJ, DnaK and GrpE are required for fully efficient folding. The protein is Protein GrpE of Aquifex aeolicus (strain VF5).